We begin with the raw amino-acid sequence, 377 residues long: MANDQHTELETEFTLDQVKDQLIEQGKKRSSLNYKDIMEKLSPFDQDPEQMDEFYEHLGDLGIEVVNENDEEVSNLRQGEDHDGNDNDDFNFDDDLSLPPGIKINDPVRMYLKEIGRVPLLSADDEVELAKRIMNGDEEAKRRLAEANLRLVVSIAKRYVGRGMLFLDLIQEGNMGLIKAVEKFDHNKGFKFSTYATWWIRQAITRAIADQARTIRIPVHMVETINKLIRVSRQLLQELGREPTPEEIAAEMELSVEKVREIMKIAQEPVSLETPIGEEDDSHLGDFIEDQEALTPADAAAYELLKEQLEDVLDTLTEREENVLRLRFGLDDGRTRTLEEVGKVFGVTRERIRQIEAKALRKLRHPSRSKRLKDFLE.

Residues 72 to 92 are disordered; it reads EVSNLRQGEDHDGNDNDDFNF. The tract at residues 144 to 214 is sigma-70 factor domain-2; the sequence is LAEANLRLVV…TRAIADQART (71 aa). The short motif at 168–171 is the Interaction with polymerase core subunit RpoC element; it reads DLIQ. The segment at 223–299 is sigma-70 factor domain-3; sequence ETINKLIRVS…DQEALTPADA (77 aa). Positions 312-365 are sigma-70 factor domain-4; that stretch reads VLDTLTEREENVLRLRFGLDDGRTRTLEEVGKVFGVTRERIRQIEAKALRKLRH. A DNA-binding region (H-T-H motif) is located at residues 338 to 357; the sequence is LEEVGKVFGVTRERIRQIEA.

Belongs to the sigma-70 factor family. RpoD/SigA subfamily. In terms of assembly, interacts transiently with the RNA polymerase catalytic core.

Its subcellular location is the cytoplasm. Functionally, sigma factors are initiation factors that promote the attachment of RNA polymerase to specific initiation sites and are then released. This sigma factor is the primary sigma factor during exponential growth. In Bacillus sp, this protein is RNA polymerase sigma factor SigA.